Consider the following 241-residue polypeptide: Capsid protein (241 aa).

Residues 1-26 carry the Bipartite nuclear localization signal motif; that stretch reads MSPASSWKRKRPSSSSAQASKKRRVY. Positions 1–30 are disordered; the sequence is MSPASSWKRKRPSSSSAQASKKRRVYRPAV.

This sequence belongs to the geminiviridae capsid protein family. Homomultimer. Interacts with the movement protein. Binds to single-stranded and double-stranded viral DNA.

Its subcellular location is the virion. It is found in the host nucleus. Its function is as follows. Encapsidates the viral genome into characteristic twinned ('geminate') particles. Binds the genomic viral ssDNA and shuttles it into and out of the cell nucleus. Plays a role in protection of the genome from degradation, virus acquisition and transmission by insect vectors, infectivity, and systemic movement. The CP of monopartite geminiviruses is absolutely essential for virus movement. The sequence is that of Capsid protein from Avena sativa (Oat).